The following is a 116-amino-acid chain: Ribosome-binding factor A (116 aa).

The protein belongs to the RbfA family. In terms of assembly, monomer. Binds 30S ribosomal subunits, but not 50S ribosomal subunits or 70S ribosomes.

The protein localises to the cytoplasm. One of several proteins that assist in the late maturation steps of the functional core of the 30S ribosomal subunit. Associates with free 30S ribosomal subunits (but not with 30S subunits that are part of 70S ribosomes or polysomes). Required for efficient processing of 16S rRNA. May interact with the 5'-terminal helix region of 16S rRNA. In Streptococcus uberis (strain ATCC BAA-854 / 0140J), this protein is Ribosome-binding factor A.